The following is a 442-amino-acid chain: Serine protease AprX (442 aa).

The Peptidase S8 domain maps to 122–439; sequence KALLDTATEA…AGAVNAENSV (318 aa). Residues aspartate 155 and histidine 187 each act as charge relay system in the active site. The segment at 318–337 is disordered; the sequence is DNNTASSDDDTVASFSSRGP. Serine 384 acts as the Charge relay system in catalysis. The tract at residues 423-442 is disordered; the sequence is EDPNIYGAGAVNAENSVPGQ.

It belongs to the peptidase S8 family.

The protein resides in the cytoplasm. Its activity is regulated as follows. Is completely inhibited by phenylmethanesulphonylfluoride (PMSF) in vitro. Functionally, displays serine protease activity. Seems to have a broad substrate specificity. The polypeptide is Serine protease AprX (aprX) (Bacillus subtilis (strain 168)).